Consider the following 460-residue polypeptide: Ecdysteroid UDP-glucosyltransferase (460 aa).

The signal sequence occupies residues 1–18 (MFISILLLALAVERILCA).

This sequence belongs to the UDP-glycosyltransferase family.

Functionally, catalyzes the transfer of glucose from UDP-glucose to ecdysteroids which are insect molting hormones. Expression of egt interferes with normal insect development and block molting. This chain is Ecdysteroid UDP-glucosyltransferase (EGT), found in Lacanobia oleracea granulosis virus (LoGV).